Consider the following 343-residue polypeptide: D-alanine--D-alanine ligase (343 aa).

In terms of domain architecture, ATP-grasp spans 132–337 (KNLFSYHKIP…YPDLIDKLIE (206 aa)). 165–220 (DRFLGWPCFVKPANMGSSIGVSKVHSPGEVKKALEKGFYYDRKLIFEEFVEGREIE) contributes to the ATP binding site. Mg(2+) is bound by residues D291, E304, and N306.

It belongs to the D-alanine--D-alanine ligase family. Mg(2+) is required as a cofactor. Requires Mn(2+) as cofactor.

The protein localises to the cytoplasm. It carries out the reaction 2 D-alanine + ATP = D-alanyl-D-alanine + ADP + phosphate + H(+). Its pathway is cell wall biogenesis; peptidoglycan biosynthesis. Cell wall formation. The protein is D-alanine--D-alanine ligase of Halothermothrix orenii (strain H 168 / OCM 544 / DSM 9562).